The primary structure comprises 908 residues: Alanine--tRNA ligase (908 aa).

The Zn(2+) site is built by H596, H600, C698, and H702.

Belongs to the class-II aminoacyl-tRNA synthetase family. It depends on Zn(2+) as a cofactor.

It is found in the cytoplasm. It carries out the reaction tRNA(Ala) + L-alanine + ATP = L-alanyl-tRNA(Ala) + AMP + diphosphate. Catalyzes the attachment of alanine to tRNA(Ala) in a two-step reaction: alanine is first activated by ATP to form Ala-AMP and then transferred to the acceptor end of tRNA(Ala). Also edits incorrectly charged Ser-tRNA(Ala) and Gly-tRNA(Ala) via its editing domain. The polypeptide is Alanine--tRNA ligase (Lysinibacillus sphaericus (strain C3-41)).